The following is a 381-amino-acid chain: Heme A synthase (381 aa).

A run of 5 helical transmembrane segments spans residues 25–45 (GAVRAWLYLLAVLVVAMVAVG), 112–132 (LLGRIVGLVFFLPFAWFWWRG), 138–158 (LLLGLLGLGLLGGLQGAIGWI), 176–196 (LALHLTTASLILAGLVWLAAG), and 212–232 (VAGLLPVLVLIQIWLGGLVAG). Histidine 277 serves as a coordination point for heme. 3 consecutive transmembrane segments (helical) span residues 279 to 299 (LFAYLVVLVALAHAVQAVRMA), 307 to 327 (AMGVAALTLAQMGLGIVTLLL), and 329 to 349 (VPLWAGLAHQVFAMAVLIMAT). Residue histidine 337 participates in heme binding.

The protein belongs to the COX15/CtaA family. Type 2 subfamily. Interacts with CtaB. It depends on heme b as a cofactor.

It is found in the cell membrane. It carries out the reaction Fe(II)-heme o + 2 A + H2O = Fe(II)-heme a + 2 AH2. Its pathway is porphyrin-containing compound metabolism; heme A biosynthesis; heme A from heme O: step 1/1. Its function is as follows. Catalyzes the conversion of heme O to heme A by two successive hydroxylations of the methyl group at C8. The first hydroxylation forms heme I, the second hydroxylation results in an unstable dihydroxymethyl group, which spontaneously dehydrates, resulting in the formyl group of heme A. The polypeptide is Heme A synthase (Methylorubrum populi (strain ATCC BAA-705 / NCIMB 13946 / BJ001) (Methylobacterium populi)).